We begin with the raw amino-acid sequence, 961 residues long: MINDKIKVKDLAIELGVSTKDLLRVLRELEISAKSTISNISIEDLPKIRAQFNTPNTNKEEERRQIQPGVILRRKRQQPSTNQTDIKLNPVDTNVSESTIQTENLILENKNTLSPHIEETTEKIPATTNEILYNSQIAKIVQYPTPSVPNKTLTTTPHQTKKNHSEKDVLESHDSSNKNIKQSSSQNTEKTNRKPAASAIPEGSSAPSLLPPVSEQIRRLHDEETENSSSEEKNVDIQQKEIPSTQVRVISKPNITQSHSWDANNTRSSSGQRTETEKQSNTAPHTDSREHTGHNKRPVSYQGQNRNNFIATPDTIPNVEHDGQNKKKRHTSRRSTEFNHKFQYNNEDDDISRQNRGRKRHKQKTTSQVTTQPIKLTKRKIRVEEAIRVADMAHQMGLKANEIIKVLFNLGVMATINMSLDIDTATLVAAEFGYEVEKIGFTEEDYLVATAPEQSESLKRRPPVVTIMGHVDHGKTSLLDAIRKTNVTGGEAGGITQHIGAYHVTTKSGEIVFLDTPGHEAFTTMRARGAQVTDIVVLVVAADDGVMEQTREAVNHARAANVPIMVAVNKMDKPEANPDRVLRELSDIGLVPEDWGGDTIVTKVSAKSLDGIDELLELLALQTDILELKANPDKPARGHIVEAKLDKGRGPIATVLIQEGTLHQGDTFVCGVFSGRVRAMFNDQGKKVKDAGPSMPIEVQGFEGVPEAGEAFICLPDEKLARRIAESRAIKQREKELAKESRVTLETFLSKTSNEKEAQVLNLVVKSDVQGSLEAILEALRKLSTAKVRINIIHGGSGAITESDILLASASDAIVIGFNVRPTAKVKEVAEQENVDIRFYDIIYKLVEEIKSAMAGLLAPISREVYLGQADVREIFNVPKIGTIAGSHVSDGKVLRNAGVRLLREGVVVYTGGIASLRRFKEDVREVQKGYECGISLENFNDIKLGDVIESFETVEEAASL.

A compositionally biased stretch (polar residues) spans 146–158; that stretch reads PSVPNKTLTTTPH. Residues 146–373 are disordered; that stretch reads PSVPNKTLTT…KTTSQVTTQP (228 aa). Residues 163–176 are compositionally biased toward basic and acidic residues; the sequence is NHSEKDVLESHDSS. Residues 177–187 are compositionally biased toward low complexity; that stretch reads NKNIKQSSSQN. Over residues 230–239 the composition is skewed to basic and acidic residues; it reads SEEKNVDIQQ. 2 stretches are compositionally biased toward polar residues: residues 241 to 285 and 301 to 310; these read EIPS…TAPH and YQGQNRNNFI. Over residues 355 to 364 the composition is skewed to basic residues; that stretch reads NRGRKRHKQK. In terms of domain architecture, tr-type G spans 460-627; it reads RRPPVVTIMG…LLALQTDILE (168 aa). A G1 region spans residues 469-476; that stretch reads GHVDHGKT. A GTP-binding site is contributed by 469-476; sequence GHVDHGKT. Residues 494 to 498 form a G2 region; sequence GITQH. The tract at residues 515 to 518 is G3; it reads DTPG. GTP is bound by residues 515–519 and 569–572; these read DTPGH and NKMD. The segment at 569 to 572 is G4; it reads NKMD. Residues 605 to 607 are G5; that stretch reads SAK.

Belongs to the TRAFAC class translation factor GTPase superfamily. Classic translation factor GTPase family. IF-2 subfamily.

It localises to the cytoplasm. Functionally, one of the essential components for the initiation of protein synthesis. Protects formylmethionyl-tRNA from spontaneous hydrolysis and promotes its binding to the 30S ribosomal subunits. Also involved in the hydrolysis of GTP during the formation of the 70S ribosomal complex. This is Translation initiation factor IF-2 from Lawsonia intracellularis (strain PHE/MN1-00).